The following is a 66-amino-acid chain: Large ribosomal subunit protein bL35 (66 aa).

Polar residues predominate over residues 18 to 27 (ATGKIKSTQS). Residues 18–41 (ATGKIKSTQSAKRHGMTKRSKRSI) are disordered. Residues 28 to 41 (AKRHGMTKRSKRSI) are compositionally biased toward basic residues.

Belongs to the bacterial ribosomal protein bL35 family.

The polypeptide is Large ribosomal subunit protein bL35 (Ehrlichia ruminantium (strain Gardel)).